Here is a 454-residue protein sequence, read N- to C-terminus: tRNA-2-methylthio-N(6)-dimethylallyladenosine synthase (454 aa).

Residues 6 to 122 (RHYHITTFGC…LKDLLESVFD (117 aa)) enclose the MTTase N-terminal domain. Residues cysteine 15, cysteine 51, cysteine 85, cysteine 157, cysteine 161, and cysteine 164 each contribute to the [4Fe-4S] cluster site. Positions 143–381 (RDSKVTAWVN…HLGNLKVAER (239 aa)) constitute a Radical SAM core domain. The 65-residue stretch at 383–447 (QRYFGRIEEV…PFSLTGQPVE (65 aa)) folds into the TRAM domain.

The protein belongs to the methylthiotransferase family. MiaB subfamily. As to quaternary structure, monomer. The cofactor is [4Fe-4S] cluster.

The protein localises to the cytoplasm. The catalysed reaction is N(6)-dimethylallyladenosine(37) in tRNA + (sulfur carrier)-SH + AH2 + 2 S-adenosyl-L-methionine = 2-methylsulfanyl-N(6)-dimethylallyladenosine(37) in tRNA + (sulfur carrier)-H + 5'-deoxyadenosine + L-methionine + A + S-adenosyl-L-homocysteine + 2 H(+). Functionally, catalyzes the methylthiolation of N6-(dimethylallyl)adenosine (i(6)A), leading to the formation of 2-methylthio-N6-(dimethylallyl)adenosine (ms(2)i(6)A) at position 37 in tRNAs that read codons beginning with uridine. The polypeptide is tRNA-2-methylthio-N(6)-dimethylallyladenosine synthase (Nostoc punctiforme (strain ATCC 29133 / PCC 73102)).